A 220-amino-acid polypeptide reads, in one-letter code: Deoxyribose-phosphate aldolase (220 aa).

Catalysis depends on Asp-92, which acts as the Proton donor/acceptor. Lys-155 (schiff-base intermediate with acetaldehyde) is an active-site residue. Catalysis depends on Lys-184, which acts as the Proton donor/acceptor.

The protein belongs to the DeoC/FbaB aldolase family. DeoC type 1 subfamily.

The protein resides in the cytoplasm. It catalyses the reaction 2-deoxy-D-ribose 5-phosphate = D-glyceraldehyde 3-phosphate + acetaldehyde. It functions in the pathway carbohydrate degradation; 2-deoxy-D-ribose 1-phosphate degradation; D-glyceraldehyde 3-phosphate and acetaldehyde from 2-deoxy-alpha-D-ribose 1-phosphate: step 2/2. Its function is as follows. Catalyzes a reversible aldol reaction between acetaldehyde and D-glyceraldehyde 3-phosphate to generate 2-deoxy-D-ribose 5-phosphate. This Natranaerobius thermophilus (strain ATCC BAA-1301 / DSM 18059 / JW/NM-WN-LF) protein is Deoxyribose-phosphate aldolase.